Here is a 250-residue protein sequence, read N- to C-terminus: N-acetylmuramoyl-L-alanine amidase CwlH (250 aa).

The first 44 residues, 1 to 44, serve as a signal peptide directing secretion; sequence MVTIKKDFIPVSNDNRPGYAMAPAYITVHNTANTAKGADAKMHA. Positions 45–141 constitute an N-acetylmuramoyl-L-alanine amidase domain; sequence KFVKNPNTSE…KKWSGKECPR (97 aa).

This sequence belongs to the N-acetylmuramoyl-L-alanine amidase 2 family.

The protein resides in the secreted. The enzyme catalyses Hydrolyzes the link between N-acetylmuramoyl residues and L-amino acid residues in certain cell-wall glycopeptides.. Functionally, autolysins are involved in some important biological processes such as cell separation, cell-wall turnover, competence for genetic transformation, formation of the flagella and sporulation. Could play a role in mother cell lysis with CwlC. The sequence is that of N-acetylmuramoyl-L-alanine amidase CwlH (cwlH) from Bacillus subtilis (strain 168).